We begin with the raw amino-acid sequence, 261 residues long: WW domain-binding protein 2 (261 aa).

The GRAM domain maps to 1–84 (MALNKNHSEG…YLMKDCEIKQ (84 aa)). Phosphotyrosine is present on Y192. The PPxY motif 1 motif lies at 196 to 200 (PPPPY). Residues 196–209 (PPPPYPGPMEPPVS) are compositionally biased toward pro residues. Positions 196–261 (PPPPYPGPME…YYPPEDKKTQ (66 aa)) are disordered. The segment covering 210–230 (GPSAPATPAAEAKAAEAAASA) has biased composition (low complexity). Position 231 is a phosphotyrosine (Y231). Residues 245-254 (SQPPPPPYYP) show a composition bias toward pro residues. The short motif at 248–252 (PPPPY) is the PPxY motif 2 element.

Binds to the WW domain of YAP1, WWP1 and WWP2. Interacts with NEDD4. Interacts with ESR1 and UBE3A. Post-translationally, phosphorylated in repsonse to EGF as well as estrogen and progesterone hormones. Tyr-192 and Tyr-231 are phosphorylated by YES and SRC inducing nuclear translocation. Expressed in the ear and the eye. Isoform 1 is expressed in brain, inner ear and organ of Corti. Isoform 2 is only detected in brain.

It localises to the cytoplasm. The protein localises to the nucleus. Functionally, acts as a transcriptional coactivator of estrogen and progesterone receptors (ESR1 and PGR) upon hormone activation. In presence of estrogen, binds to ESR1-responsive promoters. Synergizes with YAP1 to enhance PGR activity. Modulates expression of post-synaptic scaffolding proteins via regulation of ESR1, ESR2 and PGR. The sequence is that of WW domain-binding protein 2 (Wbp2) from Mus musculus (Mouse).